We begin with the raw amino-acid sequence, 367 residues long: Phosphoribosylaminoimidazole-succinocarboxamide synthase (367 aa).

This sequence belongs to the SAICAR synthetase family.

The catalysed reaction is 5-amino-1-(5-phospho-D-ribosyl)imidazole-4-carboxylate + L-aspartate + ATP = (2S)-2-[5-amino-1-(5-phospho-beta-D-ribosyl)imidazole-4-carboxamido]succinate + ADP + phosphate + 2 H(+). It functions in the pathway purine metabolism; IMP biosynthesis via de novo pathway; 5-amino-1-(5-phospho-D-ribosyl)imidazole-4-carboxamide from 5-amino-1-(5-phospho-D-ribosyl)imidazole-4-carboxylate: step 1/2. This chain is Phosphoribosylaminoimidazole-succinocarboxamide synthase, found in Shewanella sp. (strain W3-18-1).